A 393-amino-acid polypeptide reads, in one-letter code: Cobalt-precorrin-5B C(1)-methyltransferase (393 aa).

Positions 1–35 (MSDETRVGEAAEQAATPEKIRKGSARRERGNRTGF) are disordered. Basic and acidic residues predominate over residues 18–31 (EKIRKGSARRERGN).

Belongs to the CbiD family.

The enzyme catalyses Co-precorrin-5B + S-adenosyl-L-methionine = Co-precorrin-6A + S-adenosyl-L-homocysteine. It functions in the pathway cofactor biosynthesis; adenosylcobalamin biosynthesis; cob(II)yrinate a,c-diamide from sirohydrochlorin (anaerobic route): step 6/10. Its function is as follows. Catalyzes the methylation of C-1 in cobalt-precorrin-5B to form cobalt-precorrin-6A. This chain is Cobalt-precorrin-5B C(1)-methyltransferase, found in Dechloromonas aromatica (strain RCB).